The chain runs to 253 residues: Nurim homolog (253 aa).

The Nuclear portion of the chain corresponds to 1 to 2 (MT). Residues 3-30 (SIAKSIVLLASLATFAYSLYVVGSLMMF) traverse the membrane as a helical segment. At 31-56 (LSTPRSISKAHTWIFNLLDNKSRLQT) the chain is on the perinuclear space side. The chain crosses the membrane as a helical span at residues 57-78 (AYGPVVFDTLYLIGFIFQHSFL). Residues 79-96 (KSAVVKKLLAKLGLSGAE) are Nuclear-facing. A helical membrane pass occupies residues 97–113 (RTIYSLTSSLCLHYLIV). Residues 114 to 132 (NWLPAQSIVLWQIDVEQSA) are Perinuclear space-facing. Residues 133-161 (PLWWTFVITHGICWVVIFGGSLVMDLPEL) form a helical membrane-spanning segment. At 162–188 (LGVKQAYYDLKAYGPPISYKSGELRNL) the chain is on the nuclear side. Residues 189-207 (YAHVRHPSFVGLSVILFAT) form a helical membrane-spanning segment. At 208–213 (NVMSVD) the chain is on the perinuclear space side. Residues 214–231 (RLVMALLLTTYMYLAWST) traverse the membrane as a helical segment. At 232–253 (DQKDVAYQKIQLQRKKLELKAK) the chain is on the nuclear side.

It belongs to the nurim family.

It localises to the nucleus inner membrane. The protein is Nurim homolog (nrm) of Drosophila melanogaster (Fruit fly).